The sequence spans 360 residues: Dihydroorotate dehydrogenase (quinone) (360 aa).

FMN-binding positions include 65–69 and Thr-89; that span reads AGLDK. Residue Lys-69 coordinates substrate. 114 to 118 lines the substrate pocket; that stretch reads NRLGF. Positions 147 and 180 each coordinate FMN. Asn-180 provides a ligand contact to substrate. The active-site Nucleophile is the Ser-183. Asn-185 serves as a coordination point for substrate. FMN-binding residues include Lys-225 and Thr-253. 254 to 255 is a binding site for substrate; it reads NT. Residues Gly-276, Gly-305, and 326 to 327 each bind FMN; that span reads YT.

It belongs to the dihydroorotate dehydrogenase family. Type 2 subfamily. As to quaternary structure, monomer. FMN serves as cofactor.

It localises to the cell membrane. It carries out the reaction (S)-dihydroorotate + a quinone = orotate + a quinol. It participates in pyrimidine metabolism; UMP biosynthesis via de novo pathway; orotate from (S)-dihydroorotate (quinone route): step 1/1. Catalyzes the conversion of dihydroorotate to orotate with quinone as electron acceptor. In Verminephrobacter eiseniae (strain EF01-2), this protein is Dihydroorotate dehydrogenase (quinone).